A 131-amino-acid polypeptide reads, in one-letter code: Profilin-5 (131 aa).

A disulfide bridge links Cys-13 with Cys-115. Residues 81 to 97 (AVIRGKKGAGGITIKKT) carry the Involved in PIP2 interaction motif. Thr-111 is modified (phosphothreonine).

This sequence belongs to the profilin family. In terms of assembly, occurs in many kinds of cells as a complex with monomeric actin in a 1:1 ratio. Phosphorylated by MAP kinases.

The protein localises to the cytoplasm. It localises to the cytoskeleton. In terms of biological role, binds to actin and affects the structure of the cytoskeleton. At high concentrations, profilin prevents the polymerization of actin, whereas it enhances it at low concentrations. The sequence is that of Profilin-5 from Phleum pratense (Common timothy).